Consider the following 400-residue polypeptide: tRNA-specific 2-thiouridylase MnmA (400 aa).

ATP is bound by residues A19–S26 and L45. The Nucleophile role is filled by C113. C113 and C210 form a disulfide bridge. G137 provides a ligand contact to ATP. Positions R160–Q162 are interaction with tRNA. Catalysis depends on C210, which acts as the Cysteine persulfide intermediate.

Belongs to the MnmA/TRMU family.

The protein resides in the cytoplasm. It carries out the reaction S-sulfanyl-L-cysteinyl-[protein] + uridine(34) in tRNA + AH2 + ATP = 2-thiouridine(34) in tRNA + L-cysteinyl-[protein] + A + AMP + diphosphate + H(+). Its function is as follows. Catalyzes the 2-thiolation of uridine at the wobble position (U34) of tRNA, leading to the formation of s(2)U34. This Rhodopseudomonas palustris (strain BisB18) protein is tRNA-specific 2-thiouridylase MnmA.